The primary structure comprises 466 residues: 3-isopropylmalate dehydratase large subunit (466 aa).

3 residues coordinate [4Fe-4S] cluster: cysteine 347, cysteine 407, and cysteine 410.

It belongs to the aconitase/IPM isomerase family. LeuC type 1 subfamily. As to quaternary structure, heterodimer of LeuC and LeuD. [4Fe-4S] cluster is required as a cofactor.

The catalysed reaction is (2R,3S)-3-isopropylmalate = (2S)-2-isopropylmalate. It participates in amino-acid biosynthesis; L-leucine biosynthesis; L-leucine from 3-methyl-2-oxobutanoate: step 2/4. In terms of biological role, catalyzes the isomerization between 2-isopropylmalate and 3-isopropylmalate, via the formation of 2-isopropylmaleate. This is 3-isopropylmalate dehydratase large subunit from Vibrio campbellii (strain ATCC BAA-1116).